Consider the following 295-residue polypeptide: Maintenance of mitochondrial morphology protein 1 (295 aa).

At 1 to 12 (MVQLFHLTFTQG) the chain is on the lumenal side. A helical membrane pass occupies residues 13–33 (FFIGQLSVIVIVYIFLRFFLF). The Cytoplasmic segment spans residues 34–295 (CTKEELKNVQ…REGHRQKSTE (262 aa)). Positions 81–278 (EEESLDWFNV…SPQFQQISIP (198 aa)) constitute an SMP-LTD domain.

The protein belongs to the MMM1 family. In terms of assembly, homodimer. Component of the ER-mitochondria encounter structure (ERMES) or MDM complex, composed of mmm1, mdm10, mdm12 and mdm34. A mmm1 homodimer associates with one molecule of mdm12 on each side in a pairwise head-to-tail manner, and the SMP-LTD domains of mmm1 and mdm12 generate a continuous hydrophobic tunnel for phospholipid trafficking.

It localises to the endoplasmic reticulum membrane. Functionally, component of the ERMES/MDM complex, which serves as a molecular tether to connect the endoplasmic reticulum (ER) and mitochondria. Components of this complex are involved in the control of mitochondrial shape and protein biogenesis, and function in nonvesicular lipid trafficking between the ER and mitochondria. The mdm12-mmm1 subcomplex functions in the major beta-barrel assembly pathway that is responsible for biogenesis of all outer membrane beta-barrel proteins, and acts in a late step after the SAM complex. The mdm10-mdm12-mmm1 subcomplex further acts in the TOM40-specific pathway after the action of the mdm12-mmm1 complex. Essential for establishing and maintaining the structure of mitochondria and maintenance of mtDNA nucleoids. The protein is Maintenance of mitochondrial morphology protein 1 of Schizosaccharomyces japonicus (strain yFS275 / FY16936) (Fission yeast).